The following is a 91-amino-acid chain: Transcriptional repressor FrmR (91 aa).

This sequence belongs to the FrmR/RcnR family. In terms of assembly, homotetramer.

The protein localises to the cytoplasm. In terms of biological role, formaldehyde sensor. In the absence of formaldehyde, mediates repression of the frmRAB operon. Acts by binding directly to the frmRAB promoter region. In the presence of formaldehyde, it dissociates from the frmRAB promoter region and allows expression of the formaldehyde detoxification system encoded by frmA and frmB. This is Transcriptional repressor FrmR from Escherichia coli (strain UTI89 / UPEC).